The chain runs to 327 residues: Guanine nucleotide-binding protein subunit beta-like protein 1 (327 aa).

7 WD repeats span residues 16–54 (LRGT…IWSL), 58–97 (RAVT…LWDL), 103–145 (AVVD…ILEM), 153–195 (ALKP…LWDV), 200–237 (VCSR…VWSL), 242–282 (ALQV…VFHW), and 286–323 (QPLA…LWSL).

As to expression, ubiquitous. Highly expressed in heart, liver, skeletal muscle, kidney, spleen, thymus and pancreas. Detected at low levels in lung, placenta and brain.

It is found in the cytoplasm. Its subcellular location is the nucleus. Functionally, acts as a critical regulator of DNA damage response (DDR) signaling via specifically regulating phosphatidylinositol 3-kinase-related protein kinase (PIKK) family proteins. The chain is Guanine nucleotide-binding protein subunit beta-like protein 1 from Homo sapiens (Human).